The chain runs to 60 residues: Large ribosomal subunit protein uL30 (60 aa).

This sequence belongs to the universal ribosomal protein uL30 family. As to quaternary structure, part of the 50S ribosomal subunit.

This Idiomarina loihiensis (strain ATCC BAA-735 / DSM 15497 / L2-TR) protein is Large ribosomal subunit protein uL30.